The following is a 476-amino-acid chain: Exoglucanase-6A (476 aa).

Positions 1-16 (MAKFFLTAAFAAAALA) are cleaved as a signal peptide. 2 disulfide bridges follow: Cys-33-Cys-50 and Cys-44-Cys-60. The CBM1 domain occupies 33–60 (CGGIGFNGPTCCQSGSTCVKQNDWYSQC). Residues 67 to 94 (TTTSTTSTSSSSTTSRATSTTRTGGVTS) form a disordered region. Thr-144 carries O-linked (Man...) threonine glycosylation. O-linked (Man...) serine glycosylation is present at Ser-153. Residues Trp-163 and Asp-165 each coordinate substrate. Residue Asn-167 is glycosylated (N-linked (GlcNAc...) asparagine). The tract at residues 200-222 (YDLPDRDCAAAASNGEWAIANNG) is substrate binding loop 1. Asp-252 (proton donor) is an active-site residue. Substrate is bound by residues His-297, Trp-300, Asn-336, Trp-397, Lys-425, and Glu-429. Positions 423 to 461 (WVKPGGECDGTSDTTAARYDYHCGLEDALKPAPEAGQWF) are substrate binding loop 2. The Proton acceptor role is filled by Asp-431.

It belongs to the glycosyl hydrolase 6 (cellulase A) family. Monomer.

The enzyme catalyses Hydrolysis of (1-&gt;4)-beta-D-glucosidic linkages in cellulose and cellotetraose, releasing cellobiose from the non-reducing ends of the chains.. In terms of biological role, plays a central role in the recycling of plant biomass. The biological conversion of cellulose to glucose generally requires three types of hydrolytic enzymes: (1) Endoglucanases which cut internal beta-1,4-glucosidic bonds; (2) Exocellobiohydrolases that cut the disaccharide cellobiose from the non-reducing end of the cellulose polymer chain; (3) Beta-1,4-glucosidases which hydrolyze the cellobiose and other short cello-oligosaccharides to glucose. The protein is Exoglucanase-6A of Humicola insolens (Soft-rot fungus).